Reading from the N-terminus, the 438-residue chain is Proline--tRNA ligase (438 aa).

This sequence belongs to the class-II aminoacyl-tRNA synthetase family. ProS type 2 subfamily. As to quaternary structure, homodimer.

It localises to the cytoplasm. It catalyses the reaction tRNA(Pro) + L-proline + ATP = L-prolyl-tRNA(Pro) + AMP + diphosphate. In terms of biological role, catalyzes the attachment of proline to tRNA(Pro) in a two-step reaction: proline is first activated by ATP to form Pro-AMP and then transferred to the acceptor end of tRNA(Pro). This Rhodopseudomonas palustris (strain TIE-1) protein is Proline--tRNA ligase.